The sequence spans 186 residues: Hydra actinoporin-like toxin 5 (186 aa).

The N-terminal stretch at 1–20 (MLLYVCLVNLLLQSPSGVDS) is a signal peptide. The short motif at 158–160 (RDG) is the Cell attachment site element.

Belongs to the actinoporin family. HALT subfamily. In terms of assembly, octamer or nonamer in membranes. Monomer in the soluble state. In vitro, interacts with folate receptor alpha (of target organism).

It localises to the nematocyst. It is found in the secreted. The protein localises to the target cell membrane. Functionally, pore-forming protein that forms hydrophilic pores and causes cytolysis. Compared to equinatoxin-2 (AC P61914), it reveals lower cytolysis activity (5-12-fold difference, tested on erythrocytes), a larger pore size (probably 2-3 nm) and different affinity to membrane lipids (100-fold lower affinity to sphingomyelin). Binds to sulfatides (SFT) as well as to the two sphingolipids, lysophosphatidic acid (LPA) and sphingosine-1-phosphate (S1P). It seems to bind more strongly to LPA than to S1P and SFT. Shows cytolytic activity on HeLa cells, with a different potency than its paralogs (from most potent to less potent: HALT-4&gt;HALT-6~HALT-1&gt;HALT-3&gt;HALT-7&gt;HALT-2). Pore formation is a multi-step process that involves specific recognition of membrane lipid by a protein aromatic residues rich region, firm binding to the membrane (mainly driven by hydrophobic interactions) accompanied by the transfer of the N-terminal region to the lipid-water interface and finally pore formation after oligomerization of monomers. In vitro, binds to the folate receptor alpha (FOLR1), a GPI-anchored membrane protein that plays a major role in the uptake of folate/folic acid into cells via endocytosis, suggesting a possible involvement of this receptor in the mechanism of HALT-1-induced cell lysis. In vivo, does not cause visible paralysis in larvae of the blowfly Sarcophaga faculata, the most common arthropod prey of Hydra. The polypeptide is Hydra actinoporin-like toxin 5 (Hydra vulgaris (Hydra)).